The chain runs to 102 residues: Small ribosomal subunit protein uS10 (102 aa).

This sequence belongs to the universal ribosomal protein uS10 family. Part of the 30S ribosomal subunit.

Involved in the binding of tRNA to the ribosomes. The polypeptide is Small ribosomal subunit protein uS10 (Syntrophus aciditrophicus (strain SB)).